A 411-amino-acid chain; its full sequence is Tyrosine--tRNA ligase (411 aa).

The 'HIGH' region motif lies at 50–59 (PTRPDLHLGH). The short motif at 236–240 (KMSKS) is the 'KMSKS' region element. K239 serves as a coordination point for ATP. The 65-residue stretch at 345–409 (VSMAKLVVLA…GKDKFARLVL (65 aa)) folds into the S4 RNA-binding domain.

The protein belongs to the class-I aminoacyl-tRNA synthetase family. TyrS type 2 subfamily. In terms of assembly, homodimer.

The protein resides in the cytoplasm. It catalyses the reaction tRNA(Tyr) + L-tyrosine + ATP = L-tyrosyl-tRNA(Tyr) + AMP + diphosphate + H(+). In terms of biological role, catalyzes the attachment of tyrosine to tRNA(Tyr) in a two-step reaction: tyrosine is first activated by ATP to form Tyr-AMP and then transferred to the acceptor end of tRNA(Tyr). This chain is Tyrosine--tRNA ligase, found in Deinococcus radiodurans (strain ATCC 13939 / DSM 20539 / JCM 16871 / CCUG 27074 / LMG 4051 / NBRC 15346 / NCIMB 9279 / VKM B-1422 / R1).